The chain runs to 495 residues: uncharacterized protein (495 aa).

A disordered region spans residues 337–360 (STSNRESDCSGNEDDSSNAKYAKK).

This is an uncharacterized protein from Caenorhabditis elegans.